The sequence spans 308 residues: MADEEDELLETELSYDQKKEIAKWFFLNAPAGEINYVAKDLKAVLSDEEVYNEAAMEAFPVYNKTHMICLEMPSGAGDVIVSSYSEINENEYLDPRTAQVAIVDHVKQICTKVRPANDEELPSLYIEEYRYALDAEIQRYVSESYPKGMSAVNCVKGKDNEGPGSDFELVVIITAMRLSPQNFCNGSWRSVWNIDFQDESQVLDIKGKLQVGAHYFEEGNVELDAKKDFQDSTIFQSADDCAIAIANIIRHHETEYLASLEVAYSKLPDNTFKDLRRKLPVTRTLFPWQNTLQFSLTREVEKELGLGK.

The protein belongs to the F-actin-capping protein alpha subunit family. Component of the F-actin capping complex, composed of a heterodimer of an alpha and a beta subunit.

F-actin-capping proteins bind in a Ca(2+)-independent manner to the fast growing ends of actin filaments (barbed end) thereby blocking the exchange of subunits at these ends. Unlike other capping proteins (such as gelsolin and severin), these proteins do not sever actin filaments. The polypeptide is F-actin-capping protein subunit alpha (Arabidopsis thaliana (Mouse-ear cress)).